The primary structure comprises 492 residues: Xaa-Pro dipeptidase (492 aa).

At A2 the chain carries N-acetylalanine. Position 167 is a phosphoserine (S167). H255 provides a ligand contact to a dipeptide. Mn(2+) contacts are provided by D276, D287, and H370. D287 is an a dipeptide binding site. Residues H377 and R398 each coordinate a dipeptide. Positions 412 and 452 each coordinate Mn(2+).

It belongs to the peptidase M24B family. Eukaryotic-type prolidase subfamily. As to quaternary structure, homodimer. Requires Mn(2+) as cofactor.

It catalyses the reaction Xaa-L-Pro dipeptide + H2O = an L-alpha-amino acid + L-proline. Dipeptidase that catalyzes the hydrolysis of dipeptides with a prolyl (Xaa-Pro) or hydroxyprolyl residue in the C-terminal position. The preferred dipeptide substrate is Gly-Pro, but other Xaa-Pro dipeptides, such as Ala-Pro, Met-Pro, Phe-Pro, Val-Pro and Leu-Pro, can be cleaved. Plays an important role in collagen metabolism because the high level of iminoacids in collagen. This Rattus norvegicus (Rat) protein is Xaa-Pro dipeptidase (Pepd).